The sequence spans 177 residues: Large ribosomal subunit protein uL6 (177 aa).

The protein belongs to the universal ribosomal protein uL6 family. Part of the 50S ribosomal subunit.

This protein binds to the 23S rRNA, and is important in its secondary structure. It is located near the subunit interface in the base of the L7/L12 stalk, and near the tRNA binding site of the peptidyltransferase center. The sequence is that of Large ribosomal subunit protein uL6 from Vibrio cholerae serotype O1 (strain ATCC 39315 / El Tor Inaba N16961).